The chain runs to 292 residues: Protein-L-isoaspartate O-methyltransferase (292 aa).

Positions methionine 1–alanine 76 are disordered. Positions asparagine 28 to glutamine 48 are enriched in polar residues. Serine 138 is an active-site residue.

The protein belongs to the methyltransferase superfamily. L-isoaspartyl/D-aspartyl protein methyltransferase family.

The protein localises to the cytoplasm. The enzyme catalyses [protein]-L-isoaspartate + S-adenosyl-L-methionine = [protein]-L-isoaspartate alpha-methyl ester + S-adenosyl-L-homocysteine. Functionally, catalyzes the methyl esterification of L-isoaspartyl residues in peptides and proteins that result from spontaneous decomposition of normal L-aspartyl and L-asparaginyl residues. It plays a role in the repair and/or degradation of damaged proteins. This chain is Protein-L-isoaspartate O-methyltransferase, found in Janthinobacterium sp. (strain Marseille) (Minibacterium massiliensis).